Reading from the N-terminus, the 271-residue chain is Solute carrier family 66 member 2 (271 aa).

The next 3 helical transmembrane spans lie at 7–27 (GWLLVPLHQLVSWVAAGAMVF), 49–69 (FSTHVCLVLLVANILRILFWF), and 72–92 (HFESPLLWQSIVMILTMLLML). Positions 14–80 (HQLVSWVAAG…RHFESPLLWQ (67 aa)) constitute a PQ-loop 1 domain. Ser110 carries the post-translational modification Phosphoserine. 3 helical membrane-spanning segments follow: residues 145–165 (DYVQCVLAFTGVAGYITYLSI), 168–188 (ALFVETLGFLAVLTEAMLGVP), and 232–252 (VCGLLQVMVDLVILGQAYAFA). In terms of domain architecture, PQ-loop 2 spans 178-233 (AVLTEAMLGVPQLYRNYCHRSTEGMSLKMVLMWTSGDTFKTAYFLLNGAPLQFSVC).

The protein resides in the membrane. The polypeptide is Solute carrier family 66 member 2 (Slc66a2) (Mus musculus (Mouse)).